The primary structure comprises 152 residues: Sec-independent protein translocase protein TatB (152 aa).

Residues 1–21 (MFGISFSELLLVGLVALLVLG) form a helical membrane-spanning segment. Positions 98–115 (HAPGAATVAEAPPASEVP) are enriched in low complexity. Positions 98–152 (HAPGAATVAEAPPASEVPAPLPSTPAPAPTAEPAAPVATPATTAPHDSTLPPRAP) are disordered. Over residues 116–127 (APLPSTPAPAPT) the composition is skewed to pro residues. Residues 128 to 142 (AEPAAPVATPATTAP) are compositionally biased toward low complexity.

It belongs to the TatB family. As to quaternary structure, the Tat system comprises two distinct complexes: a TatABC complex, containing multiple copies of TatA, TatB and TatC subunits, and a separate TatA complex, containing only TatA subunits. Substrates initially bind to the TatABC complex, which probably triggers association of the separate TatA complex to form the active translocon.

It is found in the cell inner membrane. Part of the twin-arginine translocation (Tat) system that transports large folded proteins containing a characteristic twin-arginine motif in their signal peptide across membranes. Together with TatC, TatB is part of a receptor directly interacting with Tat signal peptides. TatB may form an oligomeric binding site that transiently accommodates folded Tat precursor proteins before their translocation. The polypeptide is Sec-independent protein translocase protein TatB (Pseudomonas fluorescens (strain ATCC BAA-477 / NRRL B-23932 / Pf-5)).